The following is a 56-amino-acid chain: Large ribosomal subunit protein bL32 (56 aa).

Residues 1 to 37 (MAVQQNKKSRSRRDMRRSHDALTTAAVSVDKASGETH) are disordered. Over residues 7-16 (KKSRSRRDMR) the composition is skewed to basic residues.

Belongs to the bacterial ribosomal protein bL32 family.

The sequence is that of Large ribosomal subunit protein bL32 from Haemophilus influenzae (strain PittEE).